Consider the following 1151-residue polypeptide: Trafficking protein particle complex subunit 9 (1151 aa).

This sequence belongs to the NIBP family. As to quaternary structure, part of the multisubunit TRAPP (transport protein particle) complex.

The protein localises to the golgi apparatus. It is found in the cis-Golgi network. Its subcellular location is the endoplasmic reticulum. The protein resides in the cytoplasm. In terms of biological role, functions as an activator of NF-kappa-B through increased phosphorylation of the IKK complex. May function in neuronal cells differentiation. May play a role in vesicular transport from endoplasmic reticulum to Golgi. This Xenopus laevis (African clawed frog) protein is Trafficking protein particle complex subunit 9 (trappc9).